The chain runs to 371 residues: Flagellar P-ring protein (371 aa).

The N-terminal stretch at 1–21 is a signal peptide; the sequence is MSRSFFATVLGLALAAMTVMA.

Belongs to the FlgI family. The basal body constitutes a major portion of the flagellar organelle and consists of four rings (L,P,S, and M) mounted on a central rod.

Its subcellular location is the periplasm. It localises to the bacterial flagellum basal body. Its function is as follows. Assembles around the rod to form the L-ring and probably protects the motor/basal body from shearing forces during rotation. The protein is Flagellar P-ring protein of Caulobacter sp. (strain K31).